The sequence spans 257 residues: Imidazole glycerol phosphate synthase subunit HisF (257 aa).

Active-site residues include Asp-11 and Asp-130.

The protein belongs to the HisA/HisF family. As to quaternary structure, heterodimer of HisH and HisF.

The protein localises to the cytoplasm. The enzyme catalyses 5-[(5-phospho-1-deoxy-D-ribulos-1-ylimino)methylamino]-1-(5-phospho-beta-D-ribosyl)imidazole-4-carboxamide + L-glutamine = D-erythro-1-(imidazol-4-yl)glycerol 3-phosphate + 5-amino-1-(5-phospho-beta-D-ribosyl)imidazole-4-carboxamide + L-glutamate + H(+). It participates in amino-acid biosynthesis; L-histidine biosynthesis; L-histidine from 5-phospho-alpha-D-ribose 1-diphosphate: step 5/9. Its function is as follows. IGPS catalyzes the conversion of PRFAR and glutamine to IGP, AICAR and glutamate. The HisF subunit catalyzes the cyclization activity that produces IGP and AICAR from PRFAR using the ammonia provided by the HisH subunit. In Aliivibrio fischeri (strain MJ11) (Vibrio fischeri), this protein is Imidazole glycerol phosphate synthase subunit HisF.